Reading from the N-terminus, the 157-residue chain is Endoribonuclease YbeY (157 aa).

Zn(2+)-binding residues include histidine 114, histidine 118, and histidine 124.

This sequence belongs to the endoribonuclease YbeY family. It depends on Zn(2+) as a cofactor.

The protein resides in the cytoplasm. Functionally, single strand-specific metallo-endoribonuclease involved in late-stage 70S ribosome quality control and in maturation of the 3' terminus of the 16S rRNA. The protein is Endoribonuclease YbeY of Serratia proteamaculans (strain 568).